We begin with the raw amino-acid sequence, 1844 residues long: ATPase family AAA domain-containing protein 5 (1844 aa).

Ser44 bears the Phosphoserine mark. Lys127 participates in a covalent cross-link: Glycyl lysine isopeptide (Lys-Gly) (interchain with G-Cter in SUMO2). Over residues 178–199 the composition is skewed to polar residues; sequence QPNTMTSLQNSKKVNPKQGTTK. The segment at 178–204 is disordered; that stretch reads QPNTMTSLQNSKKVNPKQGTTKNDFKK. Phosphoserine occurs at positions 219, 306, 311, 354, and 369. Positions 368–384 are interaction with WDR48; sequence KSNVVIQEEELELAVLE. 3 disordered regions span residues 477–499, 580–623, and 658–700; these read KLKK…REGN, ESEA…NSQL, and KFTR…SKNI. Polar residues-rich tracts occupy residues 580–592 and 599–608; these read ESEA…STPK and RISSTPTTET. Residues Ser602, Ser614, and Ser621 each carry the phosphoserine modification. Residues 664–673 show a composition bias toward basic residues; sequence TPKKSKKKSN. A compositionally biased stretch (polar residues) spans 685–700; it reads GFTSQIRKASNTSKNI. Phosphoserine is present on Ser817. Composition is skewed to basic and acidic residues over residues 987–1032 and 1092–1106; these read LEAD…ELSK and RQNL…HEDF. Disordered stretches follow at residues 987 to 1047 and 1092 to 1118; these read LEAD…SKDS and RQNL…SSDD. Ser1116 carries the phosphoserine modification. ATP is bound at residue 1132–1139; sequence GPTGVGKT. Disordered stretches follow at residues 1203 to 1235 and 1272 to 1292; these read KKIS…LPPK and ITQT…GAEE. A compositionally biased stretch (polar residues) spans 1272–1285; it reads ITQTKSTNATNSNV. The LXCXE motif motif lies at 1428-1432; it reads LVCSE. Residues 1591-1635 are disordered; sequence SLSSVSSSSNAEESKTGDEESKARDKGNNPETKKSIPCPPKTTAG. A compositionally biased stretch (basic and acidic residues) spans 1602–1624; that stretch reads EESKTGDEESKARDKGNNPETKK. An interaction with RAD51 and RFC5 region spans residues 1630-1719; sequence PKTTAGKKCS…AAAEALSFTK (90 aa).

This sequence belongs to the AAA ATPase family. In terms of assembly, component of a heteropentameric replication factor ATAD5 RFC-like complex composed of one large subunit (ATAD5) and four small subunits (RFC2, RFC3, RFC4 and RFC5). Within the ATAD5 RFC-like complex, interacts with RFC2, RFC4 and RFC5. Within the ATAD5 RFC-like complex, interacts directly via-N terminal with RAD51; the interactions is enhanced under replication stress. Interacts with RB1 predominantly in G1 phase via its LXCXE motif. Interacts with RAD9A in growing cells. The interaction with RAD9A is reduced after exposure to DNA replication-inhibiting agents. Interacts with BRD4. Interacts with PCNA. Interacts with deubiquitinating enzyme USP1, and its associated factor, WDR48. In terms of processing, ATR may stimulate the RAD9A dissociation.

The protein resides in the nucleus. Functionally, has an important role in DNA replication and in maintaining genome integrity during replication stress. Involved in a RAD9A-related damage checkpoint, a pathway that is important in determining whether DNA damage is compatible with cell survival or whether it requires cell elimination by apoptosis. Modulates the RAD9A interaction with BCL2 and thereby induces DNA damage-induced apoptosis. Promotes PCNA deubiquitination by recruiting the ubiquitin-specific protease 1 (USP1) and WDR48 thereby down-regulating the error-prone damage bypass pathway. As component of the ATAD5 RFC-like complex, regulates the function of the DNA polymerase processivity factor PCNA by unloading the ring-shaped PCNA homotrimer from DNA after replication during the S phase of the cell cycle. This seems to be dependent on its ATPase activity. Plays important roles in restarting stalled replication forks under replication stress, by unloading the PCNA homotrimer from DNA and recruiting RAD51 possibly through an ATR-dependent manner. Ultimately this enables replication fork regression, breakage, and eventual fork restart. Both the PCNA unloading activity and the interaction with WDR48 are required to efficiently recruit RAD51 to stalled replication forks. Promotes the generation of MUS81-mediated single-stranded DNA-associated breaks in response to replication stress, which is an alternative pathway to restart stalled/regressed replication forks. The protein is ATPase family AAA domain-containing protein 5 of Homo sapiens (Human).